The following is an 87-amino-acid chain: MARVTVEDCLEHVDNRFELVMLSTKRARQLATGGKEPKLAWENDKPTVMALREIAAGLMDYAVIAEAEIVEDEPLFAAFEDESNEAV.

The protein belongs to the RNA polymerase subunit omega family. As to quaternary structure, the RNAP catalytic core consists of 2 alpha, 1 beta, 1 beta' and 1 omega subunit. When a sigma factor is associated with the core the holoenzyme is formed, which can initiate transcription.

It catalyses the reaction RNA(n) + a ribonucleoside 5'-triphosphate = RNA(n+1) + diphosphate. Functionally, promotes RNA polymerase assembly. Latches the N- and C-terminal regions of the beta' subunit thereby facilitating its interaction with the beta and alpha subunits. This chain is DNA-directed RNA polymerase subunit omega, found in Pseudomonas savastanoi pv. phaseolicola (strain 1448A / Race 6) (Pseudomonas syringae pv. phaseolicola (strain 1448A / Race 6)).